The chain runs to 339 residues: Ketol-acid reductoisomerase (NADP(+)) (339 aa).

One can recognise a KARI N-terminal Rossmann domain in the interval 1 to 182 (MRVYYDRDAD…GGGRSGIIET (182 aa)). Residues 24 to 27 (YGSQ), Arg48, Ser51, Ser53, and 83 to 86 (DELQ) contribute to the NADP(+) site. Residue His108 is part of the active site. Gly134 is an NADP(+) binding site. The 146-residue stretch at 183–328 (TFREECETDL…EKLRGMMPWI (146 aa)) folds into the KARI C-terminal knotted domain. Positions 191, 195, 227, and 231 each coordinate Mg(2+). Residue Ser252 coordinates substrate.

It belongs to the ketol-acid reductoisomerase family. It depends on Mg(2+) as a cofactor.

The enzyme catalyses (2R)-2,3-dihydroxy-3-methylbutanoate + NADP(+) = (2S)-2-acetolactate + NADPH + H(+). It catalyses the reaction (2R,3R)-2,3-dihydroxy-3-methylpentanoate + NADP(+) = (S)-2-ethyl-2-hydroxy-3-oxobutanoate + NADPH + H(+). It functions in the pathway amino-acid biosynthesis; L-isoleucine biosynthesis; L-isoleucine from 2-oxobutanoate: step 2/4. It participates in amino-acid biosynthesis; L-valine biosynthesis; L-valine from pyruvate: step 2/4. Involved in the biosynthesis of branched-chain amino acids (BCAA). Catalyzes an alkyl-migration followed by a ketol-acid reduction of (S)-2-acetolactate (S2AL) to yield (R)-2,3-dihydroxy-isovalerate. In the isomerase reaction, S2AL is rearranged via a Mg-dependent methyl migration to produce 3-hydroxy-3-methyl-2-ketobutyrate (HMKB). In the reductase reaction, this 2-ketoacid undergoes a metal-dependent reduction by NADPH to yield (R)-2,3-dihydroxy-isovalerate. In Magnetospirillum molischianum (Rhodospirillum molischianum), this protein is Ketol-acid reductoisomerase (NADP(+)).